A 318-amino-acid chain; its full sequence is MANTLEQFKSITTIVADTGDIEAIKRYQPEDATTNPSLILKAAQIPDYAHLIENAIEWAKTQSSQIDQQVEDAGDKLAVNIGVEILKIVPGRISTEVDARLSFDKAGSIAKAHKLIKLYQEAGIDKSRILIKLASTWEGICAAKELEQEGINCNLTLLFSFAQARACAEAGVYLISPFVGRILDWYKKDTGLEYSATEDPGVVSVTEIYNYYKRHGFNTVVMGASFRNTGEIIELAGCDRLTIGPALLEEMANSQTEVVRKLIPAETTVEAGEPLTEAQFRWEFNENPMAVEKLAEGIRNFAIDQGKLEVMLKEKLTS.

The active-site Schiff-base intermediate with substrate is K132.

It belongs to the transaldolase family. Type 1 subfamily. In terms of assembly, homodimer.

It localises to the cytoplasm. The enzyme catalyses D-sedoheptulose 7-phosphate + D-glyceraldehyde 3-phosphate = D-erythrose 4-phosphate + beta-D-fructose 6-phosphate. Its pathway is carbohydrate degradation; pentose phosphate pathway; D-glyceraldehyde 3-phosphate and beta-D-fructose 6-phosphate from D-ribose 5-phosphate and D-xylulose 5-phosphate (non-oxidative stage): step 2/3. Functionally, transaldolase is important for the balance of metabolites in the pentose-phosphate pathway. The protein is Transaldolase of Shewanella woodyi (strain ATCC 51908 / MS32).